The sequence spans 434 residues: Septin-6 (434 aa).

A2 bears the N-acetylalanine mark. Phosphoserine is present on S27. The Septin-type G domain occupies 39–305 (QGFCFNILCV…ELYRRCKLEE (267 aa)). Residues 49-56 (GETGLGKS) are G1 motif. GTP-binding positions include 49-56 (GETGLGKS), G104, 185-193 (KADAISKSE), G239, and R254. The segment at 101 to 104 (STVG) is G3 motif. Residues 184–187 (AKAD) are G4 motif. Positions 321–409 (QETYEAKRNE…KTAAELLQSQ (89 aa)) form a coiled coil. K367 bears the N6-acetyllysine mark. The tract at residues 405 to 434 (LLQSQGSQAGGSQTLKRDKEKKNNPWLCTE) is disordered. Low complexity predominate over residues 407 to 417 (QSQGSQAGGSQ). The residue at position 416 (S416) is a Phosphoserine. Phosphothreonine is present on T418.

It belongs to the TRAFAC class TrmE-Era-EngA-EngB-Septin-like GTPase superfamily. Septin GTPase family. As to quaternary structure, septins polymerize into heterooligomeric protein complexes that form filaments, and associate with cellular membranes, actin filaments and microtubules. GTPase activity is required for filament formation. Filaments are assembled from asymmetrical heterotrimers, composed of SEPTIN2, SEPTIN6 and SEPTIN7 that associate head-to-head to form a hexameric unit. Within the trimer, directly interacts with SEPTIN2 and SEPTIN7. Also interacts with SEPTIN9 and SEPTIN12. Interaction with SEPTIN12 alters filament structure. Component of a septin core octameric complex consisting of SEPTIN12, SEPTIN7, SEPTIN6 and SEPTIN2 or SEPTIN4 in the order 12-7-6-2-2-6-7-12 or 12-7-6-4-4-6-7-12 and located in the sperm annulus. Interacts with SOCS7. Interacts with HNRNPA1. In terms of assembly, (Microbial infection) Interacts with HCV NS5B. Widely expressed.

It localises to the cytoplasm. It is found in the cytoskeleton. The protein localises to the spindle. Its subcellular location is the chromosome. The protein resides in the centromere. It localises to the kinetochore. It is found in the cleavage furrow. The protein localises to the midbody. Its subcellular location is the cell projection. The protein resides in the cilium. It localises to the flagellum. Functionally, filament-forming cytoskeletal GTPase. Required for normal organization of the actin cytoskeleton. Involved in cytokinesis. May play a role in HCV RNA replication. Forms a filamentous structure with SEPTIN12, SEPTIN6, SEPTIN2 and probably SEPTIN4 at the sperm annulus which is required for the structural integrity and motility of the sperm tail during postmeiotic differentiation. The polypeptide is Septin-6 (Homo sapiens (Human)).